Here is a 455-residue protein sequence, read N- to C-terminus: Probable glycine dehydrogenase (decarboxylating) subunit 1 (455 aa).

It belongs to the GcvP family. N-terminal subunit subfamily. As to quaternary structure, the glycine cleavage system is composed of four proteins: P, T, L and H. In this organism, the P 'protein' is a heterodimer of two subunits.

It catalyses the reaction N(6)-[(R)-lipoyl]-L-lysyl-[glycine-cleavage complex H protein] + glycine + H(+) = N(6)-[(R)-S(8)-aminomethyldihydrolipoyl]-L-lysyl-[glycine-cleavage complex H protein] + CO2. The glycine cleavage system catalyzes the degradation of glycine. The P protein binds the alpha-amino group of glycine through its pyridoxal phosphate cofactor; CO(2) is released and the remaining methylamine moiety is then transferred to the lipoamide cofactor of the H protein. The polypeptide is Probable glycine dehydrogenase (decarboxylating) subunit 1 (Saccharolobus islandicus (strain Y.G.57.14 / Yellowstone #1) (Sulfolobus islandicus)).